The sequence spans 159 residues: Phosphopantetheine adenylyltransferase (159 aa).

S9 serves as a coordination point for substrate. Residues 9–10 (SF) and H17 each bind ATP. Substrate contacts are provided by K41, L73, and K87. ATP contacts are provided by residues 88–90 (GLR), E98, and 123–129 (YGYLSSS).

This sequence belongs to the bacterial CoaD family. As to quaternary structure, homohexamer. Mg(2+) serves as cofactor.

It is found in the cytoplasm. It carries out the reaction (R)-4'-phosphopantetheine + ATP + H(+) = 3'-dephospho-CoA + diphosphate. Its pathway is cofactor biosynthesis; coenzyme A biosynthesis; CoA from (R)-pantothenate: step 4/5. In terms of biological role, reversibly transfers an adenylyl group from ATP to 4'-phosphopantetheine, yielding dephospho-CoA (dPCoA) and pyrophosphate. In Thermoanaerobacter pseudethanolicus (strain ATCC 33223 / 39E) (Clostridium thermohydrosulfuricum), this protein is Phosphopantetheine adenylyltransferase.